The chain runs to 800 residues: Cation/H(+) antiporter 9 (800 aa).

12 consecutive transmembrane segments (helical) span residues 43–63 (VIFGYALPLLELQIILIFVCI), 73–93 (IGIPRFVSNILAGLILGPQLL), 110–130 (NVALEGVARLGLVMFTFLMGV), 145–165 (IVIAVSSFFVTMISGLAFRNF), 186–206 (VIVSIQAVTLLPVITHLVYEL), 216–236 (IAISTAAVSDFLGFLTLVCIS), 247–267 (GIANRDIVALIILVLVILFIF), 287–306 (VYLYVTILTAIAASIYLSVF), 338–358 (LVTNIFFPISIAVMAMKADVV), 371–391 (ILLLGLTVVVKWTASFVPCLI), 401–421 (VIIATIMNYKGFVDLCFFDVA), and 430–450 (ATYTVMIIYVLLNAGILPTII).

The protein belongs to the monovalent cation:proton antiporter 2 (CPA2) transporter (TC 2.A.37) family. CHX (TC 2.A.37.4) subfamily.

The protein localises to the membrane. Its function is as follows. May operate as a cation/H(+) antiporter. The polypeptide is Cation/H(+) antiporter 9 (CHX9) (Arabidopsis thaliana (Mouse-ear cress)).